We begin with the raw amino-acid sequence, 113 residues long: Protein MGF 110-2L (113 aa).

The first 31 residues, 1–31 (MGFFSYLGLVLVGLASLTSLASLANLQDFST), serve as a signal peptide directing secretion.

Belongs to the asfivirus MGF 110 family.

In terms of biological role, plays a role in virus cell tropism, and may be required for efficient virus replication in macrophages. This African swine fever virus (isolate Pig/Kenya/KEN-50/1950) (ASFV) protein is Protein MGF 110-2L.